A 100-amino-acid chain; its full sequence is uncharacterized protein (100 aa).

The protein resides in the mitochondrion. This is an uncharacterized protein from Arabidopsis thaliana (Mouse-ear cress).